The following is a 46-amino-acid chain: DNA-directed RNA polymerase subunit Rpo12 (46 aa).

Zn(2+) is bound by residues Cys9, Cys24, and Cys27.

Belongs to the archaeal Rpo12/eukaryotic RPC10 RNA polymerase subunit family. In terms of assembly, part of the RNA polymerase complex. Interacts with Rpo3. Forms an Rpo3-Rpo10-Rpo11-Rpo12 complex upon coexpression. Zn(2+) is required as a cofactor.

Its subcellular location is the cytoplasm. The enzyme catalyses RNA(n) + a ribonucleoside 5'-triphosphate = RNA(n+1) + diphosphate. Functionally, DNA-dependent RNA polymerase (RNAP) catalyzes the transcription of DNA into RNA using the four ribonucleoside triphosphates as substrates. The protein is DNA-directed RNA polymerase subunit Rpo12 of Methanocaldococcus jannaschii (strain ATCC 43067 / DSM 2661 / JAL-1 / JCM 10045 / NBRC 100440) (Methanococcus jannaschii).